Reading from the N-terminus, the 293-residue chain is D-psicose 3-epimerase (293 aa).

Residues Y6 and A107 each contribute to the substrate site. E150 functions as the Proton donor/acceptor in the catalytic mechanism. E150 contacts Mn(2+). Residues E156 and 183 to 186 (DTFH) contribute to the substrate site. Mn(2+) contacts are provided by D183 and H209. A substrate-binding site is contributed by R215. The active-site Proton donor/acceptor is E244. A Mn(2+)-binding site is contributed by E244.

Belongs to the hyi family. Homotetramer. The cofactor is Mn(2+). Requires Co(2+) as cofactor.

The catalysed reaction is D-allulose = keto-D-fructose. Its function is as follows. Involved in the biosynthesis of D-psicose. Catalyzes the reversible epimerization of D-fructose at the C3 position to yield D-psicose. The enzyme is highly specific for D-psicose and shows very low activity with D-tagatose. This is D-psicose 3-epimerase from Ruminiclostridium cellulolyticum (strain ATCC 35319 / DSM 5812 / JCM 6584 / H10) (Clostridium cellulolyticum).